Reading from the N-terminus, the 297-residue chain is MANWVFCNRCFQPPHRTSCFSLTNCGHVYCDACLGKGKKNECLICKAPCRTVLLSKHTDADIQAFFMSIDSLCKKYSRETSQILEFQEKHRKRLLAFYREKISRLEESLRKSVLQIEQLQSMRSSQQTAFSTIKSSVSTKPHGCLLPPHSSAPDRLESMEVDLSPSPIRKSEIAAGPARISMISPPQDGRMGPHLTASFCFIPWLTLSKPPVPGECVISRGSPCFCIDVCPHWLLLLAFSSGRHGELTNSKTLPIYAEVQRAVLFPFQQAEGTLDTFRTPAVSVVFPLCQFERKKSF.

The segment at 7-46 (CNRCFQPPHRTSCFSLTNCGHVYCDACLGKGKKNECLICK) adopts an RING-type zinc-finger fold. Residues 91-124 (RKRLLAFYREKISRLEESLRKSVLQIEQLQSMRS) are a coiled coil.

The protein localises to the nucleus. The protein resides in the chromosome. It functions in the pathway protein modification; protein sumoylation. In terms of biological role, SUMO E3 ligase that acts as a regulator of crossing-over during meiosis: required to couple chromosome synapsis to the formation of crossover-specific recombination complexes. Localizes to recombination sites and stabilizes meiosis-specific recombination factors, such as MutS-gamma complex proteins (MSH4 and MSH5) and TEX11. May mediate sumoylation of target proteins MSH4 and/or MSH5, leading to enhance their binding to recombination sites. Acts as a limiting factor for crossover designation and/or reinforcement and plays an antagonist role with CCNB1IP1/HEI10 in the regulation of meiotic recombination. The chain is Probable E3 SUMO-protein ligase RNF212 (RNF212) from Homo sapiens (Human).